A 232-amino-acid polypeptide reads, in one-letter code: MGRVEDRVRLEASWKEALHDEFEKPYMQELSDFLRREKAAGKEIYPPGSLIFNALDSTPLDQVKVVIIGQDPYHGPGQAHGLCFSVQPGVPVPPSLQNIFKELKRDLNIDIPKHGHLQRWAEQGVLLLNTSLTVERGNAGSHAGMGWQRFTDRVIEVVSQRREHVVFMLWGSHAQSKRRLIDSSKHLVLCSAHPSPLSAHRGFIGNGHFSRANQFLEQHGLTPIDWHLPEEP.

Catalysis depends on aspartate 71, which acts as the Proton acceptor.

The protein belongs to the uracil-DNA glycosylase (UDG) superfamily. UNG family.

It localises to the cytoplasm. It catalyses the reaction Hydrolyzes single-stranded DNA or mismatched double-stranded DNA and polynucleotides, releasing free uracil.. Excises uracil residues from the DNA which can arise as a result of misincorporation of dUMP residues by DNA polymerase or due to deamination of cytosine. This is Uracil-DNA glycosylase from Azotobacter vinelandii (strain DJ / ATCC BAA-1303).